An 88-amino-acid polypeptide reads, in one-letter code: Putative defensin-like protein 228 (88 aa).

The N-terminal stretch at 1 to 27 is a signal peptide; it reads MMKSAILLMVSCVFMFLVVSYIQDVEG. Intrachain disulfides connect Cys32–Cys88, Cys42–Cys66, Cys50–Cys82, and Cys64–Cys84.

Belongs to the DEFL family.

Its subcellular location is the secreted. This chain is Putative defensin-like protein 228 (SCRL3), found in Arabidopsis thaliana (Mouse-ear cress).